The sequence spans 800 residues: Phenylalanine--tRNA ligase beta subunit (800 aa).

The tRNA-binding domain maps to 39-154 (SKDIKNLVVG…TEVEPGTDAL (116 aa)). Positions 408–483 (SFVTPIDITA…RIYGYDEIPS (76 aa)) constitute a B5 domain. 4 residues coordinate Mg(2+): Asp-461, Asp-467, Glu-470, and Glu-471. The region spanning 708-800 (PKFPGVTRDI…ALQAQGATIR (93 aa)) is the FDX-ACB domain.

It belongs to the phenylalanyl-tRNA synthetase beta subunit family. Type 1 subfamily. As to quaternary structure, tetramer of two alpha and two beta subunits. Mg(2+) is required as a cofactor.

It is found in the cytoplasm. The catalysed reaction is tRNA(Phe) + L-phenylalanine + ATP = L-phenylalanyl-tRNA(Phe) + AMP + diphosphate + H(+). The sequence is that of Phenylalanine--tRNA ligase beta subunit from Staphylococcus haemolyticus (strain JCSC1435).